The chain runs to 389 residues: Alkanesulfonate monooxygenase (389 aa).

The protein belongs to the SsuD family.

The enzyme catalyses an alkanesulfonate + FMNH2 + O2 = an aldehyde + FMN + sulfite + H2O + 2 H(+). Its function is as follows. Catalyzes the desulfonation of aliphatic sulfonates. The sequence is that of Alkanesulfonate monooxygenase from Variovorax paradoxus (strain S110).